The sequence spans 275 residues: Large ribosomal subunit protein uL2 (275 aa).

Disordered regions lie at residues 24-48 (LTTDRPHKPLTKTKQRTGGRRNAGD) and 224-264 (VMNP…NKRT). A compositionally biased stretch (basic residues) spans 31–42 (KPLTKTKQRTGG).

This sequence belongs to the universal ribosomal protein uL2 family. In terms of assembly, part of the 50S ribosomal subunit. Forms a bridge to the 30S subunit in the 70S ribosome.

One of the primary rRNA binding proteins. Required for association of the 30S and 50S subunits to form the 70S ribosome, for tRNA binding and peptide bond formation. It has been suggested to have peptidyltransferase activity; this is somewhat controversial. Makes several contacts with the 16S rRNA in the 70S ribosome. This Koribacter versatilis (strain Ellin345) protein is Large ribosomal subunit protein uL2.